A 164-amino-acid chain; its full sequence is MLTHLDDQGRAHMVDVGDKAVTQRQAQAQADVRMQPATLDLLVAGELPKGDVLATARIAGIMAAKRTADLIPLCHPLPLSSVAIEIEAHPAQSLLRIISTVRCTGRTGVEMEALMAASVAALTIYDMAKAVDRAMVIEQVFVRNKTGGARGDFQHPLTPLDTSE.

Substrate-binding positions include 73-75 (LCH) and 111-112 (ME). Residue aspartate 126 is part of the active site.

The protein belongs to the MoaC family. Homohexamer; trimer of dimers.

The catalysed reaction is (8S)-3',8-cyclo-7,8-dihydroguanosine 5'-triphosphate = cyclic pyranopterin phosphate + diphosphate. It functions in the pathway cofactor biosynthesis; molybdopterin biosynthesis. Functionally, catalyzes the conversion of (8S)-3',8-cyclo-7,8-dihydroguanosine 5'-triphosphate to cyclic pyranopterin monophosphate (cPMP). This Herpetosiphon aurantiacus (strain ATCC 23779 / DSM 785 / 114-95) protein is Cyclic pyranopterin monophosphate synthase.